We begin with the raw amino-acid sequence, 134 residues long: Holo-[acyl-carrier-protein] synthase (134 aa).

Asp-8 and Glu-57 together coordinate Mg(2+).

This sequence belongs to the P-Pant transferase superfamily. AcpS family. Requires Mg(2+) as cofactor.

It localises to the cytoplasm. The catalysed reaction is apo-[ACP] + CoA = holo-[ACP] + adenosine 3',5'-bisphosphate + H(+). Transfers the 4'-phosphopantetheine moiety from coenzyme A to a Ser of acyl-carrier-protein. This chain is Holo-[acyl-carrier-protein] synthase, found in Rhizobium etli (strain CIAT 652).